The primary structure comprises 87 residues: uncharacterized protein (87 aa).

The chain crosses the membrane as a helical span at residues 13–33; the sequence is LMIVSAVFGGIGIITTIVFVI. The interval 66–87 is disordered; sequence EECGGSTETSSSKPKKKAKKEV. Residues 78 to 87 show a composition bias toward basic residues; that stretch reads KPKKKAKKEV.

It is found in the membrane. This is an uncharacterized protein from Caenorhabditis elegans.